A 473-amino-acid chain; its full sequence is Adenosylhomocysteinase (473 aa).

Substrate is bound by residues T64, D139, and E199. 200 to 202 (TTT) lines the NAD(+) pocket. Substrate-binding residues include K229 and D233. NAD(+)-binding positions include N234, 263–268 (GYGDVG), E286, N321, 342–344 (IGH), and N387.

Belongs to the adenosylhomocysteinase family. NAD(+) serves as cofactor.

It localises to the cytoplasm. The catalysed reaction is S-adenosyl-L-homocysteine + H2O = L-homocysteine + adenosine. The protein operates within amino-acid biosynthesis; L-homocysteine biosynthesis; L-homocysteine from S-adenosyl-L-homocysteine: step 1/1. May play a key role in the regulation of the intracellular concentration of adenosylhomocysteine. The chain is Adenosylhomocysteinase from Burkholderia mallei (strain SAVP1).